A 947-amino-acid polypeptide reads, in one-letter code: Beta-glucosidase (947 aa).

The active site involves Asp-696.

Belongs to the glycosyl hydrolase 3 family.

It carries out the reaction Hydrolysis of terminal, non-reducing beta-D-glucosyl residues with release of beta-D-glucose.. The protein operates within glycan metabolism; cellulose degradation. This is Beta-glucosidase from Ruminococcus albus.